A 306-amino-acid chain; its full sequence is Polyisoprenyl-teichoic acid--peptidoglycan teichoic acid transferase TagU (306 aa).

The Cytoplasmic segment spans residues Met-1 to Thr-11. Residues Leu-12–Tyr-32 form a helical; Signal-anchor for type II membrane protein membrane-spanning segment. At Tyr-33–Lys-306 the chain is on the extracellular side.

The protein belongs to the LytR/CpsA/Psr (LCP) family. In terms of assembly, interacts with MreB. Interacts with FloT.

Its subcellular location is the cell membrane. The protein localises to the membrane raft. The protein operates within cell wall biogenesis. Its function is as follows. May catalyze the final step in cell wall teichoic acid biosynthesis, the transfer of the anionic cell wall polymers (APs) from their lipid-linked precursor to the cell wall peptidoglycan (PG). The chain is Polyisoprenyl-teichoic acid--peptidoglycan teichoic acid transferase TagU from Bacillus subtilis (strain 168).